Consider the following 567-residue polypeptide: DNA ligase B (567 aa).

Lys132 functions as the N6-AMP-lysine intermediate in the catalytic mechanism.

The protein belongs to the NAD-dependent DNA ligase family. LigB subfamily.

The catalysed reaction is NAD(+) + (deoxyribonucleotide)n-3'-hydroxyl + 5'-phospho-(deoxyribonucleotide)m = (deoxyribonucleotide)n+m + AMP + beta-nicotinamide D-nucleotide.. Catalyzes the formation of phosphodiester linkages between 5'-phosphoryl and 3'-hydroxyl groups in double-stranded DNA using NAD as a coenzyme and as the energy source for the reaction. This chain is DNA ligase B, found in Yersinia pseudotuberculosis serotype O:1b (strain IP 31758).